We begin with the raw amino-acid sequence, 194 residues long: dTTP/UTP pyrophosphatase (194 aa).

The active-site Proton acceptor is Asp-73.

This sequence belongs to the Maf family. YhdE subfamily. It depends on a divalent metal cation as a cofactor.

It localises to the cytoplasm. The catalysed reaction is dTTP + H2O = dTMP + diphosphate + H(+). It carries out the reaction UTP + H2O = UMP + diphosphate + H(+). In terms of biological role, nucleoside triphosphate pyrophosphatase that hydrolyzes dTTP and UTP. May have a dual role in cell division arrest and in preventing the incorporation of modified nucleotides into cellular nucleic acids. In Clostridium botulinum (strain Okra / Type B1), this protein is dTTP/UTP pyrophosphatase.